A 227-amino-acid chain; its full sequence is 7-cyano-7-deazaguanine synthase (227 aa).

Residue 8–18 (FSGGQDSTTCL) coordinates ATP. Zn(2+) contacts are provided by Cys187, Cys196, Cys199, and Cys202.

It belongs to the QueC family. The cofactor is Zn(2+).

It catalyses the reaction 7-carboxy-7-deazaguanine + NH4(+) + ATP = 7-cyano-7-deazaguanine + ADP + phosphate + H2O + H(+). Its pathway is purine metabolism; 7-cyano-7-deazaguanine biosynthesis. Catalyzes the ATP-dependent conversion of 7-carboxy-7-deazaguanine (CDG) to 7-cyano-7-deazaguanine (preQ(0)). This chain is 7-cyano-7-deazaguanine synthase, found in Aliivibrio salmonicida (strain LFI1238) (Vibrio salmonicida (strain LFI1238)).